Here is a 403-residue protein sequence, read N- to C-terminus: MTPFLRILNRTSLVTQIVIGLLAGIALALLAPAIARDLAFLGKVFVSALKAVAPVLVFILVMASVANHRHGQETHIRPILWLYLLGTFAAAVVAVFASMLFPSHLALSTSEATLSAPGGIAEVLQNLLLNAVDNPVNALLNANFIGVLTWAIGLGVALRHAGETTRTVVEDLSNGVTLIVRVVIRFAPLGIFGLVSSTLAQSGLDALLGYLHLLAVLIGCMLFVALVMNPLIVFWKIRRNPYPLTLLCLRESGITAFFTRSSAANIPVNLALSERLGLHEDTYSVSIPLGATINMAGAAITITVLTLAAVHTLGIQVDLPTAVLLSVVAAVCACGASGVAGGSLLLIPLACSLFGIPSEIAMQVVAVGFIIGVLQDSAETALNSSTDVLFTAAACQAQEQRHG.

A run of 9 helical transmembrane segments spans residues 14–34 (VTQI…APAI), 44–64 (VFVS…VMAS), 79–99 (ILWL…FASM), 138–158 (ALLN…GVAL), 175–195 (GVTL…FGLV), 214–234 (LAVL…LIVF), 295–315 (MAGA…TLGI), 327–347 (VVAA…LLLI), and 353–373 (LFGI…IIGV).

This sequence belongs to the dicarboxylate/amino acid:cation symporter (DAACS) (TC 2.A.23) family.

It localises to the cell inner membrane. The catalysed reaction is L-serine(in) + Na(+)(in) = L-serine(out) + Na(+)(out). The enzyme catalyses L-threonine(in) + Na(+)(in) = L-threonine(out) + Na(+)(out). Involved in the import of serine and threonine into the cell, with the concomitant import of sodium (symport system). This chain is Serine/threonine transporter SstT, found in Pseudomonas putida (strain ATCC 47054 / DSM 6125 / CFBP 8728 / NCIMB 11950 / KT2440).